A 247-amino-acid chain; its full sequence is Eukaryotic translation initiation factor 6 (247 aa).

Serine 174 and serine 175 each carry phosphoserine; by CK1.

The protein belongs to the eIF-6 family. Monomer. Associates with the 60S ribosomal subunit. Post-translationally, phosphorylation at Ser-174 and Ser-175 promotes nuclear export.

Its subcellular location is the cytoplasm. The protein resides in the nucleus. It is found in the nucleolus. Functionally, binds to the 60S ribosomal subunit and prevents its association with the 40S ribosomal subunit to form the 80S initiation complex in the cytoplasm. Is also involved in ribosome biogenesis. Associates with pre-60S subunits in the nucleus and is involved in its nuclear export. The protein is Eukaryotic translation initiation factor 6 (tif6) of Emericella nidulans (strain FGSC A4 / ATCC 38163 / CBS 112.46 / NRRL 194 / M139) (Aspergillus nidulans).